A 306-amino-acid polypeptide reads, in one-letter code: Tyrosine recombinase XerC (306 aa).

In terms of domain architecture, Core-binding (CB) spans 2-81 (AKASAAIEEF…ALRQFYGFLV (80 aa)). The Tyr recombinase domain maps to 102 to 283 (PLPKTLSHKE…DAARLVALVN (182 aa)). Catalysis depends on residues arginine 146, lysine 170, histidine 235, arginine 238, and histidine 261. The active-site O-(3'-phospho-DNA)-tyrosine intermediate is the tyrosine 270.

It belongs to the 'phage' integrase family. XerC subfamily. In terms of assembly, forms a cyclic heterotetrameric complex composed of two molecules of XerC and two molecules of XerD.

The protein resides in the cytoplasm. Site-specific tyrosine recombinase, which acts by catalyzing the cutting and rejoining of the recombining DNA molecules. The XerC-XerD complex is essential to convert dimers of the bacterial chromosome into monomers to permit their segregation at cell division. It also contributes to the segregational stability of plasmids. This chain is Tyrosine recombinase XerC, found in Erythrobacter litoralis (strain HTCC2594).